A 337-amino-acid chain; its full sequence is GTP 3',8-cyclase (337 aa).

In terms of domain architecture, Radical SAM core spans 17-242; that stretch reads AFQRRYYYLR…QSKGLLDGPA (226 aa). Arg-26 is a GTP binding site. [4Fe-4S] cluster contacts are provided by Cys-33 and Cys-37. Tyr-39 provides a ligand contact to S-adenosyl-L-methionine. Cys-40 contributes to the [4Fe-4S] cluster binding site. Arg-76 provides a ligand contact to GTP. S-adenosyl-L-methionine is bound at residue Gly-80. Thr-107 contributes to the GTP binding site. Ser-131 provides a ligand contact to S-adenosyl-L-methionine. Lys-168 contributes to the GTP binding site. Met-202 provides a ligand contact to S-adenosyl-L-methionine. Positions 265 and 268 each coordinate [4Fe-4S] cluster. 270-272 contacts GTP; the sequence is RLR. Cys-282 contacts [4Fe-4S] cluster.

Belongs to the radical SAM superfamily. MoaA family. Monomer and homodimer. It depends on [4Fe-4S] cluster as a cofactor.

The enzyme catalyses GTP + AH2 + S-adenosyl-L-methionine = (8S)-3',8-cyclo-7,8-dihydroguanosine 5'-triphosphate + 5'-deoxyadenosine + L-methionine + A + H(+). The protein operates within cofactor biosynthesis; molybdopterin biosynthesis. Catalyzes the cyclization of GTP to (8S)-3',8-cyclo-7,8-dihydroguanosine 5'-triphosphate. The chain is GTP 3',8-cyclase from Pasteurella multocida (strain Pm70).